Here is a 310-residue protein sequence, read N- to C-terminus: Olfactory receptor 2A4 (310 aa).

Residues 1–24 (MGDNITSIREFLLLGFPVGPRIQM) lie on the Extracellular side of the membrane. The N-linked (GlcNAc...) asparagine glycan is linked to N4. Residues 25-48 (LLFGLFSLFYVFTLLGNGTILGLI) form a helical membrane-spanning segment. Residues 49–56 (SLDSRLHA) are Cytoplasmic-facing. The helical transmembrane segment at 57 to 78 (PMYFFLSHLAVVDIAYACNTVP) threads the bilayer. Residues 79 to 99 (RMLVNLLHPAKPISFAGRMMQ) are Extracellular-facing. Residues 100-119 (TFLFSTFAVTECLLLVVMSY) form a helical membrane-spanning segment. The Cytoplasmic portion of the chain corresponds to 120-138 (DLYVAICHPLRYLAIMTWR). The helical transmembrane segment at 139–157 (VCITLAVTSWTTGVLLSLI) threads the bilayer. Topologically, residues 158–194 (HLVLLLPLPFCRPQKIYHFFCEILAVLKLACADTHIN) are extracellular. Residues 195–218 (ENMVLAGAISGLVGPLSTIVVSYM) form a helical membrane-spanning segment. The Cytoplasmic segment spans residues 219-235 (CILCAILQIQSREVQRK). The helical transmembrane segment at 236 to 258 (AFRTCFSHLCVIGLVYGTAIIMY) threads the bilayer. Residues 259–271 (VGPRYGNPKEQKK) are Extracellular-facing. Residues 272 to 291 (YLLLFHSLFNPMLNPLICSL) traverse the membrane as a helical segment. Over 292 to 310 (RNSEVKNTLKRVLGVERAL) the chain is Cytoplasmic.

This sequence belongs to the G-protein coupled receptor 1 family.

It localises to the cell membrane. Odorant receptor. The polypeptide is Olfactory receptor 2A4 (OR2A4) (Homo sapiens (Human)).